Consider the following 131-residue polypeptide: uncharacterized protein (131 aa).

It localises to the mitochondrion. This is an uncharacterized protein from Arabidopsis thaliana (Mouse-ear cress).